The sequence spans 171 residues: Outer membrane lipoprotein Blc (171 aa).

The first 15 residues, 1-15 (MRAIFLILCSVLLNG), serve as a signal peptide directing secretion. The N-palmitoyl cysteine moiety is linked to residue Cys-16. Residue Cys-16 is the site of S-diacylglycerol cysteine attachment.

The protein belongs to the calycin superfamily. Lipocalin family. As to quaternary structure, homodimer.

It localises to the cell outer membrane. Functionally, involved in the storage or transport of lipids necessary for membrane maintenance under stressful conditions. Displays a binding preference for lysophospholipids. This Vibrio cholerae serotype O1 (strain ATCC 39315 / El Tor Inaba N16961) protein is Outer membrane lipoprotein Blc (blc).